The primary structure comprises 421 residues: Adenosylhomocysteinase (421 aa).

Positions 128 and 153 each coordinate substrate. Position 154 to 156 (154 to 156) interacts with NAD(+); the sequence is TTT. 2 residues coordinate substrate: K183 and D187. Residues N188, 217–222, E240, 296–298, and N343 contribute to the NAD(+) site; these read GYGWCG and AGH.

It belongs to the adenosylhomocysteinase family. It depends on NAD(+) as a cofactor.

It is found in the cytoplasm. It carries out the reaction S-adenosyl-L-homocysteine + H2O = L-homocysteine + adenosine. The protein operates within amino-acid biosynthesis; L-homocysteine biosynthesis; L-homocysteine from S-adenosyl-L-homocysteine: step 1/1. May play a key role in the regulation of the intracellular concentration of adenosylhomocysteine. The sequence is that of Adenosylhomocysteinase from Thermococcus kodakarensis (strain ATCC BAA-918 / JCM 12380 / KOD1) (Pyrococcus kodakaraensis (strain KOD1)).